The following is a 603-amino-acid chain: Proline--tRNA ligase (603 aa).

The protein belongs to the class-II aminoacyl-tRNA synthetase family. ProS type 1 subfamily. Homodimer.

It localises to the cytoplasm. The catalysed reaction is tRNA(Pro) + L-proline + ATP = L-prolyl-tRNA(Pro) + AMP + diphosphate. Functionally, catalyzes the attachment of proline to tRNA(Pro) in a two-step reaction: proline is first activated by ATP to form Pro-AMP and then transferred to the acceptor end of tRNA(Pro). As ProRS can inadvertently accommodate and process non-cognate amino acids such as alanine and cysteine, to avoid such errors it has two additional distinct editing activities against alanine. One activity is designated as 'pretransfer' editing and involves the tRNA(Pro)-independent hydrolysis of activated Ala-AMP. The other activity is designated 'posttransfer' editing and involves deacylation of mischarged Ala-tRNA(Pro). The misacylated Cys-tRNA(Pro) is not edited by ProRS. The sequence is that of Proline--tRNA ligase from Synechocystis sp. (strain ATCC 27184 / PCC 6803 / Kazusa).